The sequence spans 120 residues: Large ribosomal subunit protein uL18 (120 aa).

Belongs to the universal ribosomal protein uL18 family. As to quaternary structure, part of the 50S ribosomal subunit; part of the 5S rRNA/L5/L18/L25 subcomplex. Contacts the 5S and 23S rRNAs.

Its function is as follows. This is one of the proteins that bind and probably mediate the attachment of the 5S RNA into the large ribosomal subunit, where it forms part of the central protuberance. The protein is Large ribosomal subunit protein uL18 of Methylobacterium sp. (strain 4-46).